A 158-amino-acid polypeptide reads, in one-letter code: Hypoxanthine DNA glycosylase (158 aa).

Residue asparagine 39 is part of the active site.

Belongs to the uracil-DNA glycosylase (UDG) superfamily. Type 6 (HDG) family.

In terms of biological role, excises hypoxanthine, a deamination product of adenine, from double-stranded DNA. Acts on double-stranded DNA containing G/I, T/I, A/I and C/I base pairs, but not on single-stranded inosine-containing DNA. Also has minor xanthine DNA glycosylase activity. Lacks any detectable uracil-DNA glycosylase activity. In Methanosarcina barkeri (strain Fusaro / DSM 804), this protein is Hypoxanthine DNA glycosylase.